Reading from the N-terminus, the 343-residue chain is Fructose-1,6-bisphosphatase, cytosolic (343 aa).

Residues E71, E100, D121, L123, and D124 each coordinate Mg(2+). Substrate-binding positions include 124–127, N215, Y247, Y267, and K277; that span reads DGSS. Position 283 (E283) interacts with Mg(2+).

This sequence belongs to the FBPase class 1 family. Mg(2+) is required as a cofactor.

It is found in the cytoplasm. It catalyses the reaction beta-D-fructose 1,6-bisphosphate + H2O = beta-D-fructose 6-phosphate + phosphate. The sequence is that of Fructose-1,6-bisphosphatase, cytosolic (CFBP) from Saccharum hybrid (Sugarcane).